A 448-amino-acid polypeptide reads, in one-letter code: Solute carrier family 52, riboflavin transporter, member 2 (448 aa).

Helical transmembrane passes span leucine 14–leucine 34, leucine 47–leucine 67, valine 79–tryptophan 99, valine 105–cysteine 125, and phenylalanine 147–valine 167. The N-linked (GlcNAc...) asparagine glycan is linked to asparagine 178. Residues tryptophan 198–leucine 218 form a helical membrane-spanning segment. The segment at glycine 228–proline 267 is disordered. Acidic residues predominate over residues alanine 240–alanine 250. 5 consecutive transmembrane segments (helical) span residues alanine 280–valine 300, leucine 315–leucine 335, leucine 342–leucine 362, valine 369–phenylalanine 389, and alanine 407–phenylalanine 427.

It belongs to the riboflavin transporter family.

The protein resides in the cell membrane. It carries out the reaction riboflavin(in) = riboflavin(out). Its activity is regulated as follows. Riboflavin transport is Na(+)-independent but moderately pH-sensitive. Activity is strongly inhibited by riboflavin analogs, such as lumiflavin. Weakly inhibited by flavin adenine dinucleotide (FAD) and flavin mononucleotide (FMN). Plasma membrane transporter mediating the uptake by cells of the water soluble vitamin B2/riboflavin that plays a key role in biochemical oxidation-reduction reactions of the carbohydrate, lipid, and amino acid metabolism. May also act as a receptor for 4-hydroxybutyrate. Its function is as follows. (Microbial infection) In case of infection by retroviruses, acts as a cell receptor to retroviral envelopes similar to the porcine endogenous retrovirus (PERV-A). This Papio hamadryas (Hamadryas baboon) protein is Solute carrier family 52, riboflavin transporter, member 2 (SLC52A2).